A 229-amino-acid chain; its full sequence is UPF0758 protein CLH_0547 (229 aa).

Residues 107–229 enclose the MPN domain; the sequence is KIMSPNDIAM…FISLKEKGFI (123 aa). Residues H178, H180, and D191 each coordinate Zn(2+). A JAMM motif motif is present at residues 178–191; it reads HNHPSGDPTPSKED.

It belongs to the UPF0758 family.

The sequence is that of UPF0758 protein CLH_0547 from Clostridium botulinum (strain Alaska E43 / Type E3).